The primary structure comprises 229 residues: Matrix protein (229 aa).

Positions 1–12 (MSSFKKILGLSS) are enriched in low complexity. The tract at residues 1-35 (MSSFKKILGLSSKSHKKSKKMGLPPPYDESCPMET) is disordered. The dynamin binding signature appears at 2-4 (SSF). The PPXY motif motif lies at 24-27 (PPPY). Residues 37-40 (PSAP) carry the PTAP/PSAP motif motif.

It belongs to the vesiculoviruses matrix protein family. In terms of assembly, homomultimer. Interacts with viral nucleocapsid; this interaction contributes to the virion assembly. Interacts with the viral envelope glycoprotein; this interaction contributes to the virion assembly. Interacts with host RAE1-NUP98 complex. Interacts with host NEDD4 and TSG101. Interacts with host dynamin. Interacts with host NDUFAF4; the interaction inhibits viral propagation and is independent of interferon activation. Interacts with host GTF2H5; the interaction may inhibit host transcription. Post-translationally, phosphorylated by host.

Its subcellular location is the virion. It is found in the host endomembrane system. The protein localises to the host nucleus membrane. The protein resides in the host nucleus. It localises to the host cytoplasm. Its function is as follows. Forms a double layer around the helical nucleocapsid, the inner matrix layer binding to the N helix and the outer matrix layer binding to the envelope glycoprotein. Plays a major role in assembly and budding of virion, by recruiting cellular partners of the ESCRT complexes that play a key role in releasing the budding particle from the host membrane. Condensates the ribonucleocapsid core during virus assembly. Inhibits the host mRNA nuclear export thereby inducing the shut off of cellular transcription and preventing the interferon signaling and the establishment of antiviral state in infected cells. This shutoff presumably inhibits interferon signaling and thus establishment of antiviral state in virus infected cells. Induces cell-rounding, cytoskeleton disorganization and apoptosis in infected cell. Inhibits host transcription, possibly through interaction with host DNA repair factor IIH/TFIIH GTF2H5 subunit. The polypeptide is Matrix protein (M) (Aedes (Bovine)).